Here is a 383-residue protein sequence, read N- to C-terminus: Protein COS5 (383 aa).

Residues M1–E42 lie on the Cytoplasmic side of the membrane. Residues I43–W63 traverse the membrane as a helical segment. Residues K64–P72 are Extracellular-facing. Residues L73–L93 form a helical membrane-spanning segment. The Cytoplasmic portion of the chain corresponds to S94 to R232. A helical membrane pass occupies residues I233–Q253. A topological domain (extracellular) is located at residue H254. Residues F255–F275 traverse the membrane as a helical segment. Over Q276–K383 the chain is Cytoplasmic.

This sequence belongs to the DUP/COS family.

The protein resides in the membrane. This is Protein COS5 (COS5) from Saccharomyces cerevisiae (strain ATCC 204508 / S288c) (Baker's yeast).